The primary structure comprises 551 residues: MEEFVGIVRGEASFTSYEFSINPSANVSFGEFVVTKNRDGDLVLGTVRHVKNVNWLLSSVKSNFNSLALDIEEYGESLGENEEVVATVRILGKIEGNELVPNRVPIRNGEYVYKASDDLLQMIYGNDGIEIGTLLLRPNVRIKLDVNELVSRHFAVLAVTGAGKSNAVAVIIKGIVEDVGGTVVVLDPHGDYVNLRLPETGIDLVNIIDGKIRIEDLDPEELADLIGISSSAQIQRHFLSLAWETVKHKNQSLGGESLLEALLDLLNEWISRKTIKYWSEKEGRMKSEDLKSERIETIRGIIFRIRRFLRNYGNIVTSENLVAAIKPGMVNVIDLSPLDENQMKVVVGKFLEAVFEKRVEYEMARKRFEKETSKKKRDEYEEIMTEIESKYPALAYPILVIVEEAHIFAPQGEENDAMRIMGRIAREGRKFGVGLGVVSQRPSKLNEDILSQMNTKIILRIVNPRDQDYVLKASEQLSKDLMDDIAGLGKGEAVIVGQAIKLPALVRIYNFKELRGKAGTGQYGGEDIGILDRWNKMKRNMVNSLDIDIDF.

ATP-binding positions include arginine 152, 161-166 (GAGKSN), and 507-508 (RI).

The protein belongs to the HerA family. As to quaternary structure, homohexamer. Interacts with NurA.

It catalyses the reaction Couples ATP hydrolysis with the unwinding of duplex DNA at the replication fork by translocating in the 5'-3' direction. This creates two antiparallel DNA single strands (ssDNA). The leading ssDNA polymer is the template for DNA polymerase III holoenzyme which synthesizes a continuous strand.. It carries out the reaction ATP + H2O = ADP + phosphate + H(+). The enzyme catalyses Couples ATP hydrolysis with the unwinding of duplex DNA by translocating in the 3'-5' direction.. With respect to regulation, helicase activity is stimulated in the presence of NurA. In terms of biological role, involved in DNA double-strand break (DSB) repair. Probably acts with NurA to stimulate resection of the 5' strand and produce the long 3' single-strand that is required for RadA loading. Has DNA-dependent ATPase activity and DNA helicase activity. In Pyrococcus furiosus (strain ATCC 43587 / DSM 3638 / JCM 8422 / Vc1), this protein is DNA double-strand break repair helicase HerA.